Here is a 507-residue protein sequence, read N- to C-terminus: Transcription factor NIGTH1 (507 aa).

2 disordered regions span residues 139–172 (ASAA…TALD) and 238–268 (SREA…RKAR). Over residues 152 to 161 (PKEHSEHHPL) the composition is skewed to basic and acidic residues. One can recognise an HTH myb-type domain in the interval 263 to 323 (PHRKARRCWS…HLQKYRLHTR (61 aa)). Positions 294 to 319 (PKQIRELMKVDGLTNDEVKSHLQKYR) form a DNA-binding region, H-T-H motif. A disordered region spans residues 402–507 (AVAPPPPLPP…TTTSAGAINY (106 aa)). The span at 412 to 433 (QQQLAPPYSAKSSASARLGSPD) shows a compositional bias: low complexity. The span at 437–446 (RGSGGGGGAA) shows a compositional bias: gly residues. Over residues 456–476 (ESIEEEGEGEEREDDDDDDEM) the composition is skewed to acidic residues.

As to quaternary structure, interacts with ACA5.

The protein resides in the nucleus. In terms of biological role, probable transcription factor that may play a role in regulatory networks controlling development and metabolism. The chain is Transcription factor NIGTH1 from Oryza sativa subsp. japonica (Rice).